A 342-amino-acid polypeptide reads, in one-letter code: Tetraacyldisaccharide 4'-kinase (342 aa).

Position 68–75 (68–75) interacts with ATP; that stretch reads TVGGTGKT.

This sequence belongs to the LpxK family.

The enzyme catalyses a lipid A disaccharide + ATP = a lipid IVA + ADP + H(+). It participates in glycolipid biosynthesis; lipid IV(A) biosynthesis; lipid IV(A) from (3R)-3-hydroxytetradecanoyl-[acyl-carrier-protein] and UDP-N-acetyl-alpha-D-glucosamine: step 6/6. Functionally, transfers the gamma-phosphate of ATP to the 4'-position of a tetraacyldisaccharide 1-phosphate intermediate (termed DS-1-P) to form tetraacyldisaccharide 1,4'-bis-phosphate (lipid IVA). This Burkholderia vietnamiensis (strain G4 / LMG 22486) (Burkholderia cepacia (strain R1808)) protein is Tetraacyldisaccharide 4'-kinase.